The sequence spans 415 residues: Imidazolonepropionase (415 aa).

Fe(3+) is bound by residues His80 and His82. The Zn(2+) site is built by His80 and His82. 4-imidazolone-5-propanoate-binding residues include Arg89, Tyr152, and His185. Residue Tyr152 participates in N-formimidoyl-L-glutamate binding. His250 provides a ligand contact to Fe(3+). Position 250 (His250) interacts with Zn(2+). Residue Gln253 participates in 4-imidazolone-5-propanoate binding. Fe(3+) is bound at residue Asp325. Asp325 provides a ligand contact to Zn(2+). 2 residues coordinate N-formimidoyl-L-glutamate: Asn327 and Gly329. Thr330 contacts 4-imidazolone-5-propanoate.

It belongs to the metallo-dependent hydrolases superfamily. HutI family. It depends on Zn(2+) as a cofactor. Fe(3+) serves as cofactor.

It localises to the cytoplasm. The enzyme catalyses 4-imidazolone-5-propanoate + H2O = N-formimidoyl-L-glutamate. It participates in amino-acid degradation; L-histidine degradation into L-glutamate; N-formimidoyl-L-glutamate from L-histidine: step 3/3. In terms of biological role, catalyzes the hydrolytic cleavage of the carbon-nitrogen bond in imidazolone-5-propanoate to yield N-formimidoyl-L-glutamate. It is the third step in the universal histidine degradation pathway. The chain is Imidazolonepropionase from Rhizobium meliloti (strain 1021) (Ensifer meliloti).